Consider the following 122-residue polypeptide: Cytochrome c-556 (122 aa).

Met11, Cys111, Cys114, and His115 together coordinate heme. Residues Met11, Cys111, Cys114, and His115 each contribute to the heme c site.

Monomer. In terms of processing, binds 1 heme c group covalently per subunit.

In terms of biological role, low-spin monoheme cytochrome c. This chain is Cytochrome c-556, found in Agrobacterium tumefaciens (strain II Chrys).